A 262-amino-acid chain; its full sequence is Tryptophan synthase alpha chain (262 aa).

Catalysis depends on proton acceptor residues Glu-48 and Asp-59.

Belongs to the TrpA family. Tetramer of two alpha and two beta chains.

It carries out the reaction (1S,2R)-1-C-(indol-3-yl)glycerol 3-phosphate + L-serine = D-glyceraldehyde 3-phosphate + L-tryptophan + H2O. The protein operates within amino-acid biosynthesis; L-tryptophan biosynthesis; L-tryptophan from chorismate: step 5/5. Its function is as follows. The alpha subunit is responsible for the aldol cleavage of indoleglycerol phosphate to indole and glyceraldehyde 3-phosphate. This is Tryptophan synthase alpha chain from Helicobacter pylori (strain HPAG1).